A 64-amino-acid chain; its full sequence is Conotoxin VnMRCL-04 (64 aa).

The N-terminal stretch at 1 to 22 (MRCLPVFVILLLLIASAPSVDA) is a signal peptide. Positions 23–48 (RPKTKDDVPLASFHGNAERTLLNILR) are excised as a propeptide. Position 63 is a tryptophan amide (tryptophan 63).

Belongs to the conotoxin T superfamily. In terms of processing, contains 2 disulfide bonds that can be either 'C1-C3, C2-C4' or 'C1-C4, C2-C3', since these disulfide connectivities have been observed for conotoxins with cysteine framework V (for examples, see AC P0DQQ7 and AC P81755). Expressed by the venom duct.

Its subcellular location is the secreted. This chain is Conotoxin VnMRCL-04, found in Conus ventricosus (Mediterranean cone).